Here is a 359-residue protein sequence, read N- to C-terminus: Protein Wnt-5b (359 aa).

The signal sequence occupies residues 1–17 (MPSLLLLFTAALLSSWA). The cysteines at positions 83 and 94 are disulfide-linked. N-linked (GlcNAc...) asparagine glycosylation is found at Asn-93 and Asn-99. 10 cysteine pairs are disulfide-bonded: Cys-133/Cys-141, Cys-143/Cys-161, Cys-217/Cys-231, Cys-219/Cys-226, Cys-288/Cys-319, Cys-304/Cys-314, Cys-318/Cys-358, Cys-334/Cys-349, Cys-336/Cys-346, and Cys-341/Cys-342. A lipid anchor (O-palmitoleoyl serine; by PORCN) is attached at Ser-223. 2 N-linked (GlcNAc...) asparagine glycosylation sites follow: Asn-291 and Asn-305.

It belongs to the Wnt family. In terms of assembly, interacts with PORCN. Palmitoleoylation is required for efficient binding to frizzled receptors. Depalmitoleoylation leads to Wnt signaling pathway inhibition.

Its subcellular location is the secreted. It localises to the extracellular space. The protein resides in the extracellular matrix. Functionally, ligand for members of the frizzled family of seven transmembrane receptors. Probable developmental protein. May be a signaling molecule which affects the development of discrete regions of tissues. Is likely to signal over only few cell diameters. This Homo sapiens (Human) protein is Protein Wnt-5b (WNT5B).